A 432-amino-acid polypeptide reads, in one-letter code: MSKIVKVIGREIIDSRGNPTVEAEVHLEGGFVGMAAAPSGASTGSREALELRDGDKSRFLGKGVTKAVGAVNGPIAQAILGKDAKDQAGIDKIMIDLDGTENKSNFGANAILAVSLANAKAAAAAKGMPLYEHIAELNGTPGKYSMPVPMMNIINGGEHADNNVDIQEFMIQPVGAKTVKEAIRMGSEVFHHLAKVLKGKGMNTAVGDEGGYAPNLGSNAEALAVIAEAVKAAGYELGKDITLAMDCAASEFYKDGKYVLAGEGNKAFTSEEFTHFLEELTKQYPIVSIEDGLDESDWDGFAYQTKVLGDKIQLVGDDLFVTNTKILKEGIEKGIANSILIKFNQIGSLTETLAAIKMAKDAGYTAVISHRSGETEDATIADLAVGTAAGQIKTGSMSRSDRVAKYNQLIRIEEALGEKAPYNGRKEIKGQA.

Residue glutamine 167 participates in (2R)-2-phosphoglycerate binding. The active-site Proton donor is the glutamate 209. Residues aspartate 246, glutamate 290, and aspartate 317 each coordinate Mg(2+). Residues lysine 342, arginine 371, serine 372, and lysine 393 each coordinate (2R)-2-phosphoglycerate. Residue lysine 342 is the Proton acceptor of the active site.

Belongs to the enolase family. In terms of assembly, component of the RNA degradosome, a multiprotein complex involved in RNA processing and mRNA degradation. Requires Mg(2+) as cofactor.

The protein localises to the cytoplasm. It localises to the secreted. Its subcellular location is the cell surface. It carries out the reaction (2R)-2-phosphoglycerate = phosphoenolpyruvate + H2O. It functions in the pathway carbohydrate degradation; glycolysis; pyruvate from D-glyceraldehyde 3-phosphate: step 4/5. Catalyzes the reversible conversion of 2-phosphoglycerate (2-PG) into phosphoenolpyruvate (PEP). It is essential for the degradation of carbohydrates via glycolysis. The chain is Enolase from Salmonella agona (strain SL483).